Consider the following 270-residue polypeptide: UPF0354 protein BCA_4815 (270 aa).

This sequence belongs to the UPF0354 family.

This Bacillus cereus (strain 03BB102) protein is UPF0354 protein BCA_4815.